The sequence spans 202 residues: Endothelin-1 (202 aa).

The first 23 residues, 1–23, serve as a signal peptide directing secretion; that stretch reads MDYFSMMVSLLLVAFHGAPETAA. Residues 24–49 form a disordered region; it reads SGTELSTGAENPGEKPPASAPWRPRR. The propeptide occupies 24–50; that stretch reads SGTELSTGAENPGEKPPASAPWRPRRS. Intrachain disulfides connect cysteine 53/cysteine 67 and cysteine 55/cysteine 63. Positions 74–202 are excised as a propeptide; the sequence is VNTPGHIVPY…EQKVTHNRTH (129 aa). Residues 110–124 form an endothelin-like region; that stretch reads CQCTSPHDKKCWNFC.

It belongs to the endothelin/sarafotoxin family.

It localises to the secreted. In terms of biological role, endothelins are endothelium-derived vasoconstrictor peptides. Probable ligand for G-protein coupled receptors EDNRA and EDNRB which activates PTK2B, BCAR1, BCAR3 and, GTPases RAP1 and RHOA cascade in glomerular mesangial cells. Also binds the DEAR/FBXW7-AS1 receptor. Promotes mesenteric arterial wall remodeling via activation of ROCK signaling and subsequent colocalization of NFATC3 with F-actin filaments. NFATC3 then translocates to the nucleus where it subsequently promotes the transcription of the smooth muscle hypertrophy and differentiation marker ACTA2. The chain is Endothelin-1 (EDN1) from Oryctolagus cuniculus (Rabbit).